A 474-amino-acid chain; its full sequence is Hepatocyte nuclear factor 4-alpha (474 aa).

The nuclear receptor DNA-binding region spans 57–132; that stretch reads SALCAICGDR…AGMKKEAVQN (76 aa). 2 consecutive NR C4-type zinc fingers follow at residues 60 to 80 and 96 to 120; these read CAIC…CDGC and CRFS…LKKC. Phosphoserine is present on residues S142 and S143. Y144 bears the Phosphotyrosine mark. Residues 147–377 enclose the NR LBD domain; the sequence is SSLPSINALL…NLLQEMLLGG (231 aa). Position 166 is a phosphothreonine (T166). Residue S167 is modified to Phosphoserine. Residues K234 and K307 each participate in a glycyl lysine isopeptide (Lys-Gly) (interchain with G-Cter in ubiquitin) cross-link. Position 313 is a phosphoserine; by AMPK (S313). Residues 368 to 376 carry the 9aaTAD motif; that stretch reads NLLQEMLLG. A disordered region spans residues 413–450; that stretch reads SNGQMCEWPRPRGQAATPETPQPSPPSGSGSESYKLLP. 2 positions are modified to phosphothreonine: T429 and T432. Phosphoserine is present on S436. K458 carries the N6-acetyllysine modification.

It belongs to the nuclear hormone receptor family. NR2 subfamily. As to quaternary structure, homodimerization is required for HNF4-alpha to bind to its recognition site. Interacts with CLOCK, BMAL1 and PER1. Interacts with PER2. Interacts with CRY1 and CRY2. Interacts with NR0B2/SHP; the resulting heterodimer is transcriptionally inactive. Interacts with DDX3X; this interaction disrupts the interaction between HNF4 and NR0B2 that forms inactive heterodimers and enhances the formation of active HNF4 homodimers. Post-translationally, phosphorylated on tyrosine residue(s); phosphorylation is important for its DNA-binding activity. Phosphorylation may directly or indirectly play a regulatory role in the subnuclear distribution. Phosphorylation at Ser-313 by AMPK reduces the ability to form homodimers and bind DNA. Acetylation at Lys-458 lowers transcriptional activation by about two-fold. As to expression, expressed in the liver, pancreas and colon in a circadian manner.

The protein localises to the nucleus. Its function is as follows. Transcriptional regulator which controls the expression of hepatic genes during the transition of endodermal cells to hepatic progenitor cells, facilitatating the recruitment of RNA pol II to the promoters of target genes. Activates the transcription of CYP2C38. Represses the CLOCK-BMAL1 transcriptional activity and is essential for circadian rhythm maintenance and period regulation in the liver and colon cells. The sequence is that of Hepatocyte nuclear factor 4-alpha (Hnf4a) from Mus musculus (Mouse).